The chain runs to 502 residues: Glycerol kinase (502 aa).

Residue Thr-14 coordinates ADP. The ATP site is built by Thr-14, Thr-15, and Ser-16. A sn-glycerol 3-phosphate-binding site is contributed by Thr-14. ADP is bound at residue Arg-18. The sn-glycerol 3-phosphate site is built by Arg-84, Glu-85, Tyr-136, and Asp-246. Positions 84, 85, 136, 246, and 247 each coordinate glycerol. ADP contacts are provided by Thr-268 and Gly-311. Positions 268, 311, 315, and 412 each coordinate ATP. Positions 412 and 416 each coordinate ADP.

The protein belongs to the FGGY kinase family. In terms of assembly, homotetramer and homodimer (in equilibrium). Heterodimer with EIIA-Glc. Binds 1 zinc ion per glycerol kinase EIIA-Glc dimer. The zinc ion is important for dimerization.

The catalysed reaction is glycerol + ATP = sn-glycerol 3-phosphate + ADP + H(+). It functions in the pathway polyol metabolism; glycerol degradation via glycerol kinase pathway; sn-glycerol 3-phosphate from glycerol: step 1/1. Its activity is regulated as follows. Activity of this regulatory enzyme is affected by several metabolites. Allosterically and non-competitively inhibited by fructose 1,6-bisphosphate (FBP) and unphosphorylated phosphocarrier protein EIIA-Glc (III-Glc), an integral component of the bacterial phosphotransferase (PTS) system. Key enzyme in the regulation of glycerol uptake and metabolism. Catalyzes the phosphorylation of glycerol to yield sn-glycerol 3-phosphate. This chain is Glycerol kinase, found in Escherichia coli O8 (strain IAI1).